Here is a 194-residue protein sequence, read N- to C-terminus: Small ribosomal subunit protein uS4c (194 aa).

The S4 RNA-binding domain maps to 82-143 (MRLDNILFRL…KERSKVLIQN (62 aa)).

Belongs to the universal ribosomal protein uS4 family. As to quaternary structure, part of the 30S ribosomal subunit. Contacts protein S5. The interaction surface between S4 and S5 is involved in control of translational fidelity.

The protein resides in the plastid. It localises to the chloroplast. In terms of biological role, one of the primary rRNA binding proteins, it binds directly to 16S rRNA where it nucleates assembly of the body of the 30S subunit. Functionally, with S5 and S12 plays an important role in translational accuracy. In Trimezia steyermarkii (Steyermark's trimezia), this protein is Small ribosomal subunit protein uS4c (rps4).